A 247-amino-acid polypeptide reads, in one-letter code: ATP synthase subunit a, chloroplastic (247 aa).

A run of 5 helical transmembrane segments spans residues 38–58 (QVLI…ILVV), 95–115 (VPFI…GALL), 134–154 (INTT…AGIS), 199–219 (LVVV…VMFL), and 220–240 (GLFT…AYIG).

This sequence belongs to the ATPase A chain family. In terms of assembly, F-type ATPases have 2 components, CF(1) - the catalytic core - and CF(0) - the membrane proton channel. CF(1) has five subunits: alpha(3), beta(3), gamma(1), delta(1), epsilon(1). CF(0) has four main subunits: a, b, b' and c.

It localises to the plastid. The protein localises to the chloroplast thylakoid membrane. In terms of biological role, key component of the proton channel; it plays a direct role in the translocation of protons across the membrane. The protein is ATP synthase subunit a, chloroplastic of Pisum sativum (Garden pea).